The primary structure comprises 132 residues: FPRL1 inhibitory protein (132 aa).

The signal sequence occupies residues 1–28 (MKKNITKVIIASTVIATGLLTQTNDAKA).

Belongs to the CHIPS/FLIPr family.

The protein resides in the secreted. In terms of biological role, may be involved in countering the first line of host defense mechanisms. Impairs the leukocyte response to FPRL1 agonists by binding directly to host FPRL1. The sequence is that of FPRL1 inhibitory protein (flr) from Staphylococcus aureus (strain MW2).